The sequence spans 343 residues: S-adenosylmethionine:tRNA ribosyltransferase-isomerase (343 aa).

It belongs to the QueA family. As to quaternary structure, monomer.

It localises to the cytoplasm. It carries out the reaction 7-aminomethyl-7-carbaguanosine(34) in tRNA + S-adenosyl-L-methionine = epoxyqueuosine(34) in tRNA + adenine + L-methionine + 2 H(+). The protein operates within tRNA modification; tRNA-queuosine biosynthesis. In terms of biological role, transfers and isomerizes the ribose moiety from AdoMet to the 7-aminomethyl group of 7-deazaguanine (preQ1-tRNA) to give epoxyqueuosine (oQ-tRNA). This chain is S-adenosylmethionine:tRNA ribosyltransferase-isomerase, found in Pseudoalteromonas translucida (strain TAC 125).